A 182-amino-acid chain; its full sequence is Adenine phosphoribosyltransferase (182 aa).

The protein belongs to the purine/pyrimidine phosphoribosyltransferase family. Homodimer.

The protein resides in the cytoplasm. It carries out the reaction AMP + diphosphate = 5-phospho-alpha-D-ribose 1-diphosphate + adenine. The protein operates within purine metabolism; AMP biosynthesis via salvage pathway; AMP from adenine: step 1/1. In terms of biological role, catalyzes a salvage reaction resulting in the formation of AMP, that is energically less costly than de novo synthesis. This Renibacterium salmoninarum (strain ATCC 33209 / DSM 20767 / JCM 11484 / NBRC 15589 / NCIMB 2235) protein is Adenine phosphoribosyltransferase.